The sequence spans 410 residues: MKNKLIERLISYAKVDTQSNENSQTTPSTPGQLALANMLVEELKEIGMKDVTIDENGYVMATLPSNTEKEVPTIGFLAHVDTATDFTGKNVNPQVIEQYDGKDIVLNESLNVVLSPKEFPELADYAGHTLITTDGTTLLGADNKAGISEIMTAMEYLIAHPEIKHGKIRVAFTPDEEIGRGPHKFDVEAFNAKFAYTVDGGPLGELQYESFNAAAAKITCKGTNVHPGTAKGKMVNAAKIAMQFHAALPENEAPEFTEGYEGFYHLLSIKGDVSETSLSYIIRDFDRDRFNERKDTVQKIANNLKAKYGENSVTVDMNDQYYNMREKIEPVKEIVDIAYKAMKNLDIEPVVKPIRGGTDGSQLSYMGLPCPNIFTGGENFHGKYEYISADNMVKAANVIVEIVKLFEERA.

H79 is a Zn(2+) binding site. Residue D81 is part of the active site. D142 lines the Zn(2+) pocket. E176 acts as the Proton acceptor in catalysis. The Zn(2+) site is built by E177, D199, and H381.

This sequence belongs to the peptidase M20B family. Zn(2+) is required as a cofactor.

The protein localises to the cytoplasm. It carries out the reaction Release of the N-terminal residue from a tripeptide.. Cleaves the N-terminal amino acid of tripeptides. This chain is Peptidase T, found in Bacillus licheniformis (strain ATCC 14580 / DSM 13 / JCM 2505 / CCUG 7422 / NBRC 12200 / NCIMB 9375 / NCTC 10341 / NRRL NRS-1264 / Gibson 46).